A 430-amino-acid polypeptide reads, in one-letter code: Glucose-1-phosphate adenylyltransferase (430 aa).

Alpha-D-glucose 1-phosphate is bound by residues G163, 178–179, and S210; that span reads EK.

The protein belongs to the bacterial/plant glucose-1-phosphate adenylyltransferase family. In terms of assembly, homotetramer.

It catalyses the reaction alpha-D-glucose 1-phosphate + ATP + H(+) = ADP-alpha-D-glucose + diphosphate. It functions in the pathway glycan biosynthesis; glycogen biosynthesis. Its function is as follows. Involved in the biosynthesis of ADP-glucose, a building block required for the elongation reactions to produce glycogen. Catalyzes the reaction between ATP and alpha-D-glucose 1-phosphate (G1P) to produce pyrophosphate and ADP-Glc. In Synechococcus elongatus (strain ATCC 33912 / PCC 7942 / FACHB-805) (Anacystis nidulans R2), this protein is Glucose-1-phosphate adenylyltransferase.